A 299-amino-acid polypeptide reads, in one-letter code: CCR4-NOT transcription complex subunit 9 (299 aa).

An N-acetylmethionine modification is found at Met1.

It belongs to the CNOT9 family. In terms of assembly, homodimer. Component of the CCR4-NOT complex; distinct complexes seem to exist that differ in the participation of probably mutually exclusive catalytic subunits. Interacts with MYB, ATF2, RARA, RARB, RARG, RXRA, RXRB and RXRG. Identified in a complex with ATF2 bound to target DNA. Interacts with NANOS2. Directly interacts with ZNF335. Detected in spleen, thymus, prostate, testis, ovary and intestine.

Its subcellular location is the nucleus. The protein resides in the cytoplasm. The protein localises to the P-body. Its function is as follows. Component of the CCR4-NOT complex which is one of the major cellular mRNA deadenylases and is linked to various cellular processes including bulk mRNA degradation, miRNA-mediated repression, translational repression during translational initiation and general transcription regulation. Additional complex functions may be a consequence of its influence on mRNA expression. Involved in down-regulation of MYB- and JUN-dependent transcription. May play a role in cell differentiation. Can bind oligonucleotides, such as poly-G, poly-C or poly-T (in vitro), but the physiological relevance of this is not certain. Does not bind poly-A. Enhances ligand-dependent transcriptional activity of nuclear hormone receptors, including RARA, expect ESR1-mediated transcription that is not only slightly increased, if at all. This is CCR4-NOT transcription complex subunit 9 from Homo sapiens (Human).